The following is a 502-amino-acid chain: Maturase K (502 aa).

It belongs to the intron maturase 2 family. MatK subfamily.

Its subcellular location is the plastid. It localises to the chloroplast. Usually encoded in the trnK tRNA gene intron. Probably assists in splicing its own and other chloroplast group II introns. This chain is Maturase K, found in Fremontodendron californicum (California flannelbush).